Reading from the N-terminus, the 327-residue chain is Malate dehydrogenase (327 aa).

An NAD(+)-binding site is contributed by 11 to 17 (GAAGQIS). Substrate is bound by residues Arg92 and Arg98. Residues Asn105, Gln112, and 129–131 (VGN) each bind NAD(+). Substrate-binding residues include Asn131 and Arg162. His187 serves as the catalytic Proton acceptor.

This sequence belongs to the LDH/MDH superfamily. MDH type 2 family.

It carries out the reaction (S)-malate + NAD(+) = oxaloacetate + NADH + H(+). Its function is as follows. Catalyzes the reversible oxidation of malate to oxaloacetate. In Cellvibrio japonicus (strain Ueda107) (Pseudomonas fluorescens subsp. cellulosa), this protein is Malate dehydrogenase.